The primary structure comprises 238 residues: RNA pyrophosphohydrolase (238 aa).

The 144-residue stretch at 6–149 (GFRPNVGIIL…KREVYQMALS (144 aa)) folds into the Nudix hydrolase domain. The Nudix box signature appears at 38–59 (GGIKYGETPEQAMYRELHEEVG). The disordered stretch occupies residues 161–238 (APLSPYGRGG…PDDTPSKDSL (78 aa)). Residues 171 to 181 (PHRERDGRDNR) show a composition bias toward basic and acidic residues. Positions 188–199 (RNDQNTRGQRQP) are enriched in polar residues. Over residues 204–217 (VTTSTVIVETVITS) the composition is skewed to low complexity.

It belongs to the Nudix hydrolase family. RppH subfamily. A divalent metal cation is required as a cofactor.

Accelerates the degradation of transcripts by removing pyrophosphate from the 5'-end of triphosphorylated RNA, leading to a more labile monophosphorylated state that can stimulate subsequent ribonuclease cleavage. This chain is RNA pyrophosphohydrolase, found in Ralstonia nicotianae (strain ATCC BAA-1114 / GMI1000) (Ralstonia solanacearum).